The sequence spans 68 residues: Large ribosomal subunit protein bL31 (68 aa).

Residues Cys-16, Cys-18, Cys-36, and Cys-39 each coordinate Zn(2+).

The protein belongs to the bacterial ribosomal protein bL31 family. Type A subfamily. Part of the 50S ribosomal subunit. Requires Zn(2+) as cofactor.

Functionally, binds the 23S rRNA. In Dictyoglomus turgidum (strain DSM 6724 / Z-1310), this protein is Large ribosomal subunit protein bL31.